Here is a 414-residue protein sequence, read N- to C-terminus: Ribulose bisphosphate carboxylase large chain (414 aa).

Substrate contacts are provided by Asn101 and Thr151. The active-site Proton acceptor is Lys153. Lys155 lines the substrate pocket. Residues Lys179, Asp181, and Glu182 each contribute to the Mg(2+) site. N6-carboxylysine is present on Lys179. Catalysis depends on His272, which acts as the Proton acceptor. Substrate is bound by residues Arg273, His305, and Ser357.

This sequence belongs to the RuBisCO large chain family. Type I subfamily. In terms of assembly, heterohexadecamer of 8 large chains and 8 small chains; disulfide-linked. The disulfide link is formed within the large subunit homodimers. Mg(2+) serves as cofactor. In terms of processing, the disulfide bond which can form in the large chain dimeric partners within the hexadecamer appears to be associated with oxidative stress and protein turnover.

The protein localises to the plastid. It is found in the chloroplast. The enzyme catalyses 2 (2R)-3-phosphoglycerate + 2 H(+) = D-ribulose 1,5-bisphosphate + CO2 + H2O. It catalyses the reaction D-ribulose 1,5-bisphosphate + O2 = 2-phosphoglycolate + (2R)-3-phosphoglycerate + 2 H(+). Its function is as follows. RuBisCO catalyzes two reactions: the carboxylation of D-ribulose 1,5-bisphosphate, the primary event in carbon dioxide fixation, as well as the oxidative fragmentation of the pentose substrate in the photorespiration process. Both reactions occur simultaneously and in competition at the same active site. The chain is Ribulose bisphosphate carboxylase large chain (rbcL) from Onychium japonicum (Japanese claw fern).